The sequence spans 112 residues: MLTSLFVHLPCNGSGKGKQNKSHCEKCKKRMVSSGIEPLIPALLARCLNQLGQETIVICFSPSLHTIKPTSQMCARTTAHYLCATKINLHCHSNFRQTPTEKCSYYFLSRAH.

This is an uncharacterized protein from Saccharomyces cerevisiae (strain ATCC 204508 / S288c) (Baker's yeast).